The following is a 419-amino-acid chain: Cysteine desulfurase (419 aa).

Residues 69-70 (AT), Asn157, Gln185, and 205-207 (SAH) contribute to the pyridoxal 5'-phosphate site. At Lys208 the chain carries N6-(pyridoxal phosphate)lysine. Thr245 contributes to the pyridoxal 5'-phosphate binding site. Cys333 serves as the catalytic Cysteine persulfide intermediate. Cys333 contacts [2Fe-2S] cluster. The disordered stretch occupies residues 392–419 (TPIQDEVRDDNRASSNSLNRGSAASKES). Residues 404-413 (ASSNSLNRGS) are compositionally biased toward polar residues.

It belongs to the class-V pyridoxal-phosphate-dependent aminotransferase family. NifS/IscS subfamily. Homodimer. Pyridoxal 5'-phosphate is required as a cofactor.

It carries out the reaction (sulfur carrier)-H + L-cysteine = (sulfur carrier)-SH + L-alanine. Its function is as follows. Catalyzes the removal of elemental sulfur atoms from cysteine to produce alanine. Seems to participate in the biosynthesis of the nitrogenase metalloclusters by providing the inorganic sulfur required for the Fe-S core formation. This Frankia sp. (strain EuIK1) protein is Cysteine desulfurase.